Reading from the N-terminus, the 208-residue chain is Large ribosomal subunit protein uL3 (208 aa).

Gln149 is modified (N5-methylglutamine).

The protein belongs to the universal ribosomal protein uL3 family. As to quaternary structure, part of the 50S ribosomal subunit. Forms a cluster with proteins L14 and L19. In terms of processing, methylated by PrmB.

One of the primary rRNA binding proteins, it binds directly near the 3'-end of the 23S rRNA, where it nucleates assembly of the 50S subunit. The sequence is that of Large ribosomal subunit protein uL3 from Actinobacillus succinogenes (strain ATCC 55618 / DSM 22257 / CCUG 43843 / 130Z).